The following is a 119-amino-acid chain: Large ribosomal subunit protein bL20 (119 aa).

The protein belongs to the bacterial ribosomal protein bL20 family.

Binds directly to 23S ribosomal RNA and is necessary for the in vitro assembly process of the 50S ribosomal subunit. It is not involved in the protein synthesizing functions of that subunit. The sequence is that of Large ribosomal subunit protein bL20 from Neisseria gonorrhoeae (strain ATCC 700825 / FA 1090).